The primary structure comprises 429 residues: Protein ABERRANT PANICLE ORGANIZATION 1 (429 aa).

A compositionally biased stretch (pro residues) spans 1–11 (MMNPRRLPPLP). The interval 1-21 (MMNPRRLPPLPSSTSSASAAD) is disordered. In terms of domain architecture, F-box spans 25–71 (PRVWRRLPQPLVDRILACLPTPSFLRLRAACRRFYHLLFSSPFLHSH). 2 consecutive transmembrane segments (helical) span residues 72–92 (LLLS…GHLL) and 112–132 (VAGG…LAFL). 3 Kelch repeats span residues 229–277 (MAFA…ELGG), 284–339 (RVAL…AEGG), and 350–397 (YVVL…GAAG).

Part of a putative SCF (ASK/Cullin/F-box) ubiquitin ligase complex. Interacts with FL/APO2. As to expression, expressed in apical meristems and the lateral organ primordia throughout development. Expressed in seedlings, roots, leaves, shoot apical meristem (SAM), developing panicles, and, at lower levels, in developing seeds.

It is found in the membrane. Its pathway is protein modification; protein ubiquitination. In terms of biological role, component of SCF(ASK-cullin-F-box) E3 ubiquitin ligase complexes, which may mediate the ubiquitination and subsequent proteasomal degradation of target proteins. Together with FL/APO2, involved in the temporal regulation of meristem identity during both vegetative and reproductive developments in an APO2-dependent manner. Promotes spikelet formation by suppressing the precocious conversion of inflorescence meristems to spikelet meristems, probably via a positive regulation of class-C floral homeotic genes, but not of class-B genes, and through the control of cell proliferation in meristems. Mediates culm development and strength/diameter enhancement at internodes. Required for the regulation of the plastochron, floral organ identity, and floral determinacy. Controls the number of primary rachis branches (PRBs). May trigger the formation of vascular bundle systems which, consequently, promote carbohydrate translocation to panicles. Involved in ozone-induced grain yield regulation. The sequence is that of Protein ABERRANT PANICLE ORGANIZATION 1 from Oryza sativa subsp. japonica (Rice).